The following is a 589-amino-acid chain: Putative phospholipase B-like 2 (589 aa).

The signal sequence occupies residues M1–A41. N88 and N110 each carry an N-linked (GlcNAc...) asparagine glycan. C142 and C152 are oxidised to a cystine. N-linked (GlcNAc...) asparagine glycosylation is found at N231, N436, and N465. Residues C492 and C495 are joined by a disulfide bond. The N-linked (GlcNAc...) asparagine glycan is linked to N515.

The protein belongs to the phospholipase B-like family. As to quaternary structure, interacts with IGF2R. The p76 protein is synthesized as a 80 kDa precursor which is then processed into a N-terminal 32 kDa form and a C-terminal 45 kDa form. In terms of processing, glycosylated; contains mannose 6-phosphate sugars. As to expression, ubiquitously expressed, with highest levels in heart, brain and liver.

The protein localises to the lysosome lumen. In terms of biological role, putative phospholipase. The polypeptide is Putative phospholipase B-like 2 (PLBD2) (Homo sapiens (Human)).